A 108-amino-acid polypeptide reads, in one-letter code: Circadian clock oscillator protein KaiB (108 aa).

This sequence belongs to the KaiB family. As to quaternary structure, homodimer, interacts with KaiC. The KaiABC complex composition changes during the circadian cycle to control KaiC phosphorylation. Complexes KaiC(6), KaiA(2-4):KaiC(6), KaiB(6):KaiC(6) and KaiC(6):KaiB(6):KaiA(12) are among the most important forms, many form cooperatively. Undergoes a major conformational rearrangment; in the free state forms homotetramers as a dimer of dimers. When bound to the CI domain of KaiC switches to a monomeric thioredoxin-fold (KaiB(fs)). KaiB(fs) binds CikA, leading it to dephosphorylate phospho-RpaA.

Its function is as follows. Key component of the KaiABC oscillator complex, which constitutes the main circadian regulator in cyanobacteria. Complex composition changes during the circadian cycle to control KaiC phosphorylation. KaiA stimulates KaiC autophosphorylation, while KaiB sequesters KaiA, leading to KaiC autodephosphorylation. Phospho-Ser-431 KaiC accumulation triggers binding of KaiB to form the KaiB(6):KaiC(6) complex, leading to changes in output regulators CikA and SasA. KaiB switches to a thioredoxin-like fold (KaiB(fs)) when bound to KaiC. KaiB(6):KaiC(6) formation exposes a site for KaiA binding that sequesters KaiA from KaiC, making the KaiC(6):KaiB(6):KaiA(12) complex that results in KaiC autodephosphorylation. Functionally, a metamorphic protein which reversibly switches between an inactive tetrameric fold and a rare, thioredoxin-like monomeric fold (KaiB(fs)). KaiB(fs) binds phospho-KaiC, KaiA and CikA. KaiA and CikA compete for binding to KaiB(fs), and KaiB(fs) and SasA compete for binding to KaiC, thus the clock oscillator and output signal pathway are tightly coupled. This is Circadian clock oscillator protein KaiB from Nostoc sp. (strain PCC 7120 / SAG 25.82 / UTEX 2576).